Here is a 353-residue protein sequence, read N- to C-terminus: GTPase Obg (353 aa).

The Obg domain occupies 1–159 (MRFVDEVVIN…RVIRLELKLL (159 aa)). Residues 160–334 (ADVGLLGMPN…LCTAIMQELT (175 aa)) form the OBG-type G domain. GTP-binding positions include 166–173 (GMPNAGKS), 191–195 (FTTLH), 213–216 (DIPG), 284–287 (NKMD), and 315–317 (SAA). Positions 173 and 193 each coordinate Mg(2+).

This sequence belongs to the TRAFAC class OBG-HflX-like GTPase superfamily. OBG GTPase family. Monomer. Requires Mg(2+) as cofactor.

The protein localises to the cytoplasm. Functionally, an essential GTPase which binds GTP, GDP and possibly (p)ppGpp with moderate affinity, with high nucleotide exchange rates and a fairly low GTP hydrolysis rate. Plays a role in control of the cell cycle, stress response, ribosome biogenesis and in those bacteria that undergo differentiation, in morphogenesis control. The polypeptide is GTPase Obg (Dichelobacter nodosus (strain VCS1703A)).